Consider the following 431-residue polypeptide: Acrosin (431 aa).

Residues 1 to 16 (MLPTAVLLVLVVSVVA) form the signal peptide. N19 carries an N-linked (GlcNAc...) asparagine glycan. 6 disulfide bridges follow: C22–C152, C26–C160, C71–C87, C175–C244, C207–C223, and C234–C264. The Peptidase S1 domain occupies 40–288 (VVGGQAAQQG…FLDWIASRIG (249 aa)). Catalysis depends on charge relay system residues H86 and D140. N208 carries an N-linked (GlcNAc...) asparagine glycan. S238 serves as the catalytic Charge relay system. A disordered region spans residues 295-385 (IQPATPTPPT…PPPASTKPPQ (91 aa)). The segment covering 331 to 341 (PHPHPHPHPHP) has biased composition (basic residues). The segment covering 342–381 (RPPQPPAAQAPPPPPPPPPPPPPPPPPPPPPPPPPPPAST) has biased composition (pro residues). The propeptide at 351–431 (APPPPPPPPP…TEIPEVTLAS (81 aa)) is pro-rich.

The protein belongs to the peptidase S1 family. In terms of assembly, heavy chain (catalytic) and a light chain linked by two disulfide bonds. Forms a heterodimer with SERPINA5.

The enzyme catalyses Preferential cleavage: Arg-|-Xaa, Lys-|-Xaa.. With respect to regulation, inhibited by SERPINA5. Its function is as follows. Acrosin is the major protease of mammalian spermatozoa. It is a serine protease of trypsin-like cleavage specificity, it is synthesized in a zymogen form, proacrosin and stored in the acrosome. This Oryctolagus cuniculus (Rabbit) protein is Acrosin (ACR).